A 288-amino-acid polypeptide reads, in one-letter code: 11-beta-hydroxysteroid dehydrogenase 1 (288 aa).

The Cytoplasmic segment spans residues 1-4; that stretch reads MKKY. Residues 5–20 traverse the membrane as a helical; Signal-anchor for type II membrane protein segment; sequence LLPVLVLCLGYYYSTN. At 21–288 the chain is on the lumenal side; that stretch reads EEFRPEMLQG…SYNRDLFVSN (268 aa). NADP(+) is bound by residues 37–63, 88–89, and 115–117; these read GASKGIGREMAYHLSKMGAHVVLTARS, TM, and NHI. Asn-158 carries N-linked (GlcNAc...) asparagine glycosylation. Ser-166 is a binding site for substrate. Tyr-179 serves as the catalytic Proton acceptor. Position 179 to 183 (179 to 183) interacts with NADP(+); the sequence is YSASK. Residue Asn-203 is glycosylated (N-linked (GlcNAc...) asparagine). NADP(+) is bound by residues 212–218 and 214–218; these read GFIDTET and IDTET.

It belongs to the short-chain dehydrogenases/reductases (SDR) family. In terms of assembly, homodimer. In terms of processing, glycosylated. In terms of tissue distribution, liver, kidney, lung and testis. Brain. Expressed in liver (at protein level).

It localises to the endoplasmic reticulum membrane. It carries out the reaction an 11beta-hydroxysteroid + NADP(+) = an 11-oxosteroid + NADPH + H(+). The catalysed reaction is corticosterone + NADP(+) = 11-dehydrocorticosterone + NADPH + H(+). The enzyme catalyses a 7beta-hydroxysteroid + NADP(+) = a 7-oxosteroid + NADPH + H(+). It catalyses the reaction 7-oxocholesterol + NADPH + H(+) = 7beta-hydroxycholesterol + NADP(+). It carries out the reaction chenodeoxycholate + NADP(+) = 7-oxolithocholate + NADPH + H(+). The catalysed reaction is 7-oxolithocholate + NADPH + H(+) = ursodeoxycholate + NADP(+). The enzyme catalyses glycochenodeoxycholate + NADP(+) = 7-oxoglycolithocholate + NADPH + H(+). It catalyses the reaction taurochenodeoxycholate + NADP(+) = 7-oxotaurolithocholate + NADPH + H(+). It carries out the reaction tauroursodeoxycholate + NADP(+) = 7-oxotaurolithocholate + NADPH + H(+). The catalysed reaction is glycoursodeoxycholate + NADP(+) = 7-oxoglycolithocholate + NADPH + H(+). The enzyme catalyses 7-oxopregnenolone + NADPH + H(+) = 7beta-hydroxypregnenolone + NADP(+). It catalyses the reaction 3beta,7alpha-dihydroxyandrost-5-en-17-one + NADP(+) = 3beta-hydroxy-5-androstene-7,17-dione + NADPH + H(+). It carries out the reaction 3beta-hydroxy-5-androstene-7,17-dione + NADPH + H(+) = 3beta,7beta-dihydroxyandrost-5-en-17-one + NADP(+). The catalysed reaction is 3beta-hydroxy-5alpha-androstane-7,17-dione + NADPH + H(+) = 3beta,7beta-dihydroxy-5alpha-androstan-17-one + NADP(+). Its function is as follows. Controls the reversible conversion of biologically active glucocorticoids such as 11-dehydrocorticosterone to corticosterone using NADP(H). Participates in the corticosteroid receptor-mediated anti-inflammatory response, as well as metabolic and homeostatic processes. Bidirectional in vitro, predominantly functions as a reductase in vivo, thereby increasing the concentration of active glucocorticoids. It has broad substrate specificity, besides glucocorticoids, it accepts other steroid and sterol substrates. Interconverts 7-oxo- and 7-hydroxy-neurosteroids such as 7-oxopregnenolone and 7beta-hydroxypregnenolone, 7-oxodehydroepiandrosterone (3beta-hydroxy-5-androstene-7,17-dione) and 7beta-hydroxydehydroepiandrosterone (3beta,7beta-dihydroxyandrost-5-en-17-one), among others. Catalyzes the stereo-specific conversion of the major dietary oxysterol, 7-ketocholesterol (7-oxocholesterol), into the more polar 7-beta-hydroxycholesterol metabolite. 7-oxocholesterol is one of the most important oxysterols, it participates in several events such as induction of apoptosis, accumulation in atherosclerotic lesions, lipid peroxidation, and induction of foam cell formation. Mediates the 7-oxo reduction of 7-oxolithocholate mainly to chenodeoxycholate, and to a lesser extent to ursodeoxycholate, both in its free form and when conjugated to glycine or taurine, providing a link between glucocorticoid activation and bile acid metabolism. Catalyzes the synthesis of 7-beta-25-dihydroxycholesterol from 7-oxo-25-hydroxycholesterol in vitro, which acts as a ligand for the G-protein-coupled receptor (GPCR) Epstein-Barr virus-induced gene 2 (EBI2) and may thereby regulate immune cell migration. This chain is 11-beta-hydroxysteroid dehydrogenase 1, found in Rattus norvegicus (Rat).